We begin with the raw amino-acid sequence, 127 residues long: MTRYNYIRNLRIIRGEEIKVGVSSDRIPMIEIEPGHNDPERMCVMFTAMEYSHIPYQADNLDEVYDSCKILTSKITTYINVAIGFGKNLGLKLSEMMLVTRDKSKREFKVGLELGIKYAYNWTCKFQ.

This is an uncharacterized protein from Thermoproteus tenax (TTV1).